The sequence spans 219 residues: Flagellar L-ring protein (219 aa).

An N-terminal signal peptide occupies residues 1–14; sequence MKRLVLISLVLAAG. Residue C15 is the site of N-palmitoyl cysteine attachment. C15 is lipidated: S-diacylglycerol cysteine.

This sequence belongs to the FlgH family. As to quaternary structure, the basal body constitutes a major portion of the flagellar organelle and consists of four rings (L,P,S, and M) mounted on a central rod.

It localises to the cell outer membrane. The protein localises to the bacterial flagellum basal body. Its function is as follows. Assembles around the rod to form the L-ring and probably protects the motor/basal body from shearing forces during rotation. The polypeptide is Flagellar L-ring protein (Dechloromonas aromatica (strain RCB)).